Reading from the N-terminus, the 342-residue chain is MYTLARQLLFKLSPETSHELSIDLIGAGGRLGLNRLLTPEPASLPVSVLGLEFPNPVGLAAGLDKNGDAIDGFGQLGFGFIEIGTVTPRPQPGNPKPRLFRLPQANAIINRMGFNNHGVDHLLARVRAAKYRGVLGINIGKNFDTPVERAVDDYLICLDKVYADASYVTVNVSSPNTPGLRSLQFGDSLKQLLEALRQRQEALALRHGRRVPLAIKIAPDMTDEETALVAAALVEAGMDAVIATNTTLGREGVEGLPHGDEAGGLSGAPVREKSTHTVKVLAGELGGRLPIIAAGGITEGAHAAEKIAAGASLVQIYSGFIYKGPALIREAVDAIAALPRRN.

Residues 61–65 (AGLDK) and threonine 85 each bind FMN. Position 65 (lysine 65) interacts with substrate. 110 to 114 (NRMGF) provides a ligand contact to substrate. FMN is bound by residues asparagine 138 and asparagine 171. Asparagine 171 contributes to the substrate binding site. The Nucleophile role is filled by serine 174. Asparagine 176 serves as a coordination point for substrate. The FMN site is built by lysine 216 and threonine 244. 245 to 246 (NT) is a substrate binding site. Residues glycine 267, glycine 296, and 317–318 (YS) contribute to the FMN site.

This sequence belongs to the dihydroorotate dehydrogenase family. Type 2 subfamily. In terms of assembly, monomer. FMN serves as cofactor.

The protein localises to the cell membrane. It carries out the reaction (S)-dihydroorotate + a quinone = orotate + a quinol. It participates in pyrimidine metabolism; UMP biosynthesis via de novo pathway; orotate from (S)-dihydroorotate (quinone route): step 1/1. In terms of biological role, catalyzes the conversion of dihydroorotate to orotate with quinone as electron acceptor. In Pseudomonas aeruginosa (strain UCBPP-PA14), this protein is Dihydroorotate dehydrogenase (quinone).